The chain runs to 95 residues: Co-chaperonin GroES (95 aa).

Belongs to the GroES chaperonin family. In terms of assembly, heptamer of 7 subunits arranged in a ring. Interacts with the chaperonin GroEL.

It is found in the cytoplasm. Functionally, together with the chaperonin GroEL, plays an essential role in assisting protein folding. The GroEL-GroES system forms a nano-cage that allows encapsulation of the non-native substrate proteins and provides a physical environment optimized to promote and accelerate protein folding. GroES binds to the apical surface of the GroEL ring, thereby capping the opening of the GroEL channel. This chain is Co-chaperonin GroES, found in Streptococcus equi subsp. equi (strain 4047).